The sequence spans 821 residues: MFERFTEKAIKVIMLAQEEARRLGHNFVGTEQILLGLVGEGTGIAAQVLKSMNVNLKDARVEVEKIIGRGSGFVAVEIPFTPRAKRVLELSLEEARQLGHNYIGTEHLLMGLVREGEGVAARVLENLAVDVSSIRAEVIQMLGENAEANVSGSNATQARSKTPTLEEFGSNLTQMAIEGGLDPVVGRQKEIERVIQILGRRTKNNPVLIGEPGVGKTAIAEGLAQRIANRDVPSILEDKLVITLDVGLLVAGTKYRGEFEERLKRIMDEIKSADNVILVIDEVHTLIGAGAAEGAIDAANLLKPALARGELQCIGATTLEEYRKHIEKDPALERRFHPVVVGEPSVEETIEILFGLRDRYEKHHQLTMSDGALAAAAKYANQYISDRFLPDKAIDLIDEAGSRVRLLNSQLPPAARELDKELRAVLKTKDEAIRAQKYETAEQYRAREMEIKAQIAAIAQSKKNEPDLNLEDPVVTEDDIAEIVAAWTGIPVTKLTKSESEKLMQMEETLHGRIIGQDEAVIAVSRAIRRARVGLKNPNRPIASFIFSGPTGVGKTELTKALASYFFGSEASMIRLDMSEYMERHTVSKLIGSPPGYVGYSEGGYLTEAVRKKPYTVILFDEIEKAHPDIFNLLLQILEDGRLTDAKGRTIDFKNTLLIMTSNIGSKVIEKGGGSLGFELSEDQTESQYTRVRSLVNEELKQYFRPEFLNRLDEIIVFRQLTKDEVREIAELMLNEVFARIKQQDIQLNVTERFKERLVEEGYNPSYGARPLRRAVMRLLEDSLAEEVLSGKIKAGDSPVVDVTNEGEVKVLLGEKLELLT.

Residues 2–144 (FERFTEKAIK…RAEVIQMLGE (143 aa)) form the Clp R domain. Repeat regions lie at residues 5–70 (FTEK…IGRG) and 80–144 (FTPR…MLGE). ATP contacts are provided by residues 210–217 (GEPGVGKT) and 549–556 (GPTGVGKT).

It belongs to the ClpA/ClpB family.

The protein localises to the plastid. Its subcellular location is the chloroplast. Its function is as follows. May interact with a ClpP-like protease involved in degradation of denatured proteins in the chloroplast. The sequence is that of ATP-dependent Clp protease ATP-binding subunit ClpA homolog (clpC) from Porphyra purpurea (Red seaweed).